The following is an 897-amino-acid chain: MDAMPEYSLFLVRILEELDTKYSTVSYQDLCKSLCARFDLVHLAKLRSLLFYTACLDPAFPATLFKDKMRCSVEDQQSKKLMVAADIVTMFNLIQMNGGMAKDKLPMGPRPKFHKNQSFESCRSDTDVYKYNDNDRAYKLLDTRGHHVSRNSPKSDCNSCQQFIPTSDPNFLLGVTKDLKCRAASLDKLQHLPQYASVSPPPCEMQSTYFPMDIDSESTTDQESLHANPGIKDVYVSSGEPFTVHSCVQKRNIFKEDFHNLVAFSPHVITTECRANPKSGGNYHHRRELSKPPTFFNHSFELPYSNPYFEPVNSPLQNKGRVKHESLDDLQASTYFGPTTVSECVSNRRTSSKHGRQPAWPVKSLSLNTEEGPDFERSFLNGKVPKDNHRHNIGTMENDQHFQCAKDKPTASPSGFSKKSNGSKTKDMSSVACGPGIEKREVGRRYKDKSINCPSFQSSNVDNGMSVGTQTEQHESRKVKDYPSQNKFKERPPFKHSEEDSEIVSDNISDIFRFLDDMSVCESLGVVQPSCYNSNGSLSQVTKSDGDSSPERNTIKIGKTGIKLDRLFQSLENSDDELKESVCKLVLRIGEIEKKLESLSGVRGEISQVLSKLTRLDEKIQEPEVNGKSSDGGLVEQIKTDANLSPHVFQCHTTGHNMKVEKSPEWCCSEADGSESLRVKALKKSVFTRRSSRSLNEENSATESKVASITNSPRDWRTVSYSSHNGEEGKERDRHSEGKERHRKSREAERQYEAHQGHRSSKPPKDSYLVEQVFSPHHFPPTVKTHVKGSPLYTDLRLTGHADGKRSQPSWTIEEYKRNSGDKNKLSALDLQVQESLNPNNLEYWMEDIYTPGYDSLLKRKEAEFRRAKACKIGALIFAAACTVILVIVVPICTMKS.

Over 1 to 872 the chain is Cytoplasmic; sequence MDAMPEYSLF…AEFRRAKACK (872 aa). 3 disordered regions span residues 405 to 433, 450 to 502, and 688 to 766; these read AKDK…SVAC, SINC…EDSE, and TRRS…PPKD. Polar residues-rich tracts occupy residues 411-423 and 452-471; these read ASPS…SNGS and NCPS…GTQT. Residues 472 to 498 are compositionally biased toward basic and acidic residues; sequence EQHESRKVKDYPSQNKFKERPPFKHSE. Residues 697–724 show a composition bias toward polar residues; it reads EENSATESKVASITNSPRDWRTVSYSSH. Residues 725–756 show a composition bias toward basic and acidic residues; sequence NGEEGKERDRHSEGKERHRKSREAERQYEAHQ. The helical transmembrane segment at 873–893 threads the bilayer; the sequence is IGALIFAAACTVILVIVVPIC. The Extracellular portion of the chain corresponds to 894–897; that stretch reads TMKS.

This sequence belongs to the MINAR family.

It localises to the cell membrane. Functionally, intrinsically disordered protein which may negatively regulate mTOR signaling pathway by stabilizing the mTOR complex component DEPTOR. Negatively regulates angiogenesis. Negatively regulates cell growth. May play a role in neuronal development. The chain is Major intrinsically disordered Notch2-binding receptor 1 (minar1) from Danio rerio (Zebrafish).